A 193-amino-acid polypeptide reads, in one-letter code: MPVWGGGNKCGACGRTVYHAEEVQCDGRTFHRCCFLCMVCRKNLDSTTVAIHDEEIYCKSCYGKKYGPKGYGYGQGAGTLNMDRGERLGIKPESAQPHRPTTNPNTSKFAQKYGGAEKCSRCGDSVYAAEKIIGAGKPWHKNCFRCAKCGKSLESTTLTEKEGEIYCKGCYAKNFGPKGFGYGQGAGALVHAQ.

The LIM zinc-binding 1 domain maps to 10-61 (CGACGRTVYHAEEVQCDGRTFHRCCFLCMVCRKNLDSTTVAIHDEEIYCKSC). A Nuclear localization signal motif is present at residues 64-69 (KKYGPK). A Glycyl lysine isopeptide (Lys-Gly) (interchain with G-Cter in SUMO2) cross-link involves residue lysine 91. An N6-acetyllysine mark is found at lysine 112 and lysine 131. Positions 119–170 (CSRCGDSVYAAEKIIGAGKPWHKNCFRCAKCGKSLESTTLTEKEGEIYCKGC) constitute an LIM zinc-binding 2 domain. Residue lysine 137 is modified to N6-acetyllysine; alternate. Lysine 137 carries the post-translational modification N6-succinyllysine; alternate. Lysine 161 bears the N6-acetyllysine mark.

As to quaternary structure, interacts with KAT14. The LIM domain 1 is necessary and sufficient for this interaction. Interacts with GLRX3. Highly expressed in the aorta; weakly found in the kidney, thymus, and intestine. Barely detectable in brain, testis, esophagus, lung, liver, aortic adventitia, vena cava, or uterus; not present in heart and skeletal muscle.

The protein localises to the nucleus. Drastically down-regulated in response to PDGF-BB or cell injury, that promote smooth muscle cell proliferation and dedifferentiation. Seems to play a role in the development of the embryonic vascular system. This chain is Cysteine and glycine-rich protein 2 (Csrp2), found in Rattus norvegicus (Rat).